The following is a 158-amino-acid chain: Dysbindin domain-containing protein 2 (158 aa).

The disordered stretch occupies residues phenylalanine 79–serine 158. Over residues proline 106 to serine 131 the composition is skewed to low complexity. Serine 119 and serine 120 each carry phosphoserine. Threonine 137 is subject to Phosphothreonine. Residue serine 142 is modified to Phosphoserine. Acidic residues predominate over residues serine 142–glycine 151.

It belongs to the dysbindin family. Monomer. Interacts with CSNK1D and CSNK1E.

May modulate the activity of casein kinase-1. Inhibits CSNK1D autophosphorylation (in vitro). The chain is Dysbindin domain-containing protein 2 (Dbndd2) from Mus musculus (Mouse).